A 303-amino-acid polypeptide reads, in one-letter code: Putative S-adenosyl-L-methionine-dependent methyltransferase SCO6443 (303 aa).

Residues aspartate 130 and 159 to 160 (DL) contribute to the S-adenosyl-L-methionine site.

The protein belongs to the UPF0677 family.

Functionally, exhibits S-adenosyl-L-methionine-dependent methyltransferase activity. In Streptomyces coelicolor (strain ATCC BAA-471 / A3(2) / M145), this protein is Putative S-adenosyl-L-methionine-dependent methyltransferase SCO6443.